Here is an 84-residue protein sequence, read N- to C-terminus: ATP synthase subunit c (84 aa).

Transmembrane regions (helical) follow at residues 9 to 29 (LGLAIFGCAIGMALAALGCGI) and 57 to 77 (ILGLAFIESLAIYALVINLII).

The protein belongs to the ATPase C chain family. F-type ATPases have 2 components, F(1) - the catalytic core - and F(0) - the membrane proton channel. F(1) has five subunits: alpha(3), beta(3), gamma(1), delta(1), epsilon(1). F(0) has three main subunits: a(1), b(2) and c(10-14). The alpha and beta chains form an alternating ring which encloses part of the gamma chain. F(1) is attached to F(0) by a central stalk formed by the gamma and epsilon chains, while a peripheral stalk is formed by the delta and b chains.

It is found in the cell membrane. Its function is as follows. F(1)F(0) ATP synthase produces ATP from ADP in the presence of a proton or sodium gradient. F-type ATPases consist of two structural domains, F(1) containing the extramembraneous catalytic core and F(0) containing the membrane proton channel, linked together by a central stalk and a peripheral stalk. During catalysis, ATP synthesis in the catalytic domain of F(1) is coupled via a rotary mechanism of the central stalk subunits to proton translocation. Key component of the F(0) channel; it plays a direct role in translocation across the membrane. A homomeric c-ring of between 10-14 subunits forms the central stalk rotor element with the F(1) delta and epsilon subunits. This Lawsonia intracellularis (strain PHE/MN1-00) protein is ATP synthase subunit c.